Here is a 156-residue protein sequence, read N- to C-terminus: MPRKGPAPKRPLVLDPVYGSPLVTQLINKVLVDGKKSTAERIVYGALEGARAKSGGDPVAALKKAMENVKPSLEVRSRRVGGATYQVPVEVKPGRSTALALRWLVGYSKARREKTMTERLQNEILDASNGLGAAVKRREDTHKMAESNKAFAHYRW.

This sequence belongs to the universal ribosomal protein uS7 family. As to quaternary structure, part of the 30S ribosomal subunit. Contacts proteins S9 and S11.

Functionally, one of the primary rRNA binding proteins, it binds directly to 16S rRNA where it nucleates assembly of the head domain of the 30S subunit. Is located at the subunit interface close to the decoding center, probably blocks exit of the E-site tRNA. This chain is Small ribosomal subunit protein uS7, found in Arthrobacter sp. (strain FB24).